A 372-amino-acid chain; its full sequence is Phenylalanine--tRNA ligase alpha subunit (372 aa).

E276 contributes to the Mg(2+) binding site.

Belongs to the class-II aminoacyl-tRNA synthetase family. Phe-tRNA synthetase alpha subunit type 1 subfamily. In terms of assembly, tetramer of two alpha and two beta subunits. It depends on Mg(2+) as a cofactor.

Its subcellular location is the cytoplasm. It carries out the reaction tRNA(Phe) + L-phenylalanine + ATP = L-phenylalanyl-tRNA(Phe) + AMP + diphosphate + H(+). The polypeptide is Phenylalanine--tRNA ligase alpha subunit (Thermobifida fusca (strain YX)).